Consider the following 348-residue polypeptide: Ferredoxin--NADP reductase (348 aa).

FAD is bound by residues T26, E45, Q53, Y58, A98, F133, D299, and S340.

This sequence belongs to the ferredoxin--NADP reductase type 2 family. Homodimer. Requires FAD as cofactor.

The enzyme catalyses 2 reduced [2Fe-2S]-[ferredoxin] + NADP(+) + H(+) = 2 oxidized [2Fe-2S]-[ferredoxin] + NADPH. The polypeptide is Ferredoxin--NADP reductase (Prosthecochloris aestuarii (strain DSM 271 / SK 413)).